Reading from the N-terminus, the 423-residue chain is MAKTIQAIRGMNDCSPTESPLWQWVEGKVRSVLQNYGYSEVRMPIVESTPLFARAIGEVTDVVSKEMYTFWDNDEQLTLRPEGTAGCVRAAIEHGWIYNQEQRLWYMGPMFRHERPQKGRYRQFHQAGVEVFGIPNPEIDAELIMLTARLWKELGIAEHVTLQLNSIGSLEARKNYRSALVAFLQQHVDLLSEEEKERLEKNPLRILDTKNQALQEVLNDAPKLLAYLDDDSREHFAQLCALLDAVGIQYEVNPKLVRGLDYYNKTVFEWVTSALGAQGTVCGGGRYDGLVEQLGGHATTGVGFAMGLERLVLLVQEVNQSIRLPSAVDIYVVYQGEGTTLAAFQLAETLRTELPQLRVMTHCSGGNFKKQFKRADKSGATLALVIGESEVQNQQVVVKHLLGGAEQQTLALDDIVDYIKNNF.

This sequence belongs to the class-II aminoacyl-tRNA synthetase family. In terms of assembly, homodimer.

The protein localises to the cytoplasm. The catalysed reaction is tRNA(His) + L-histidine + ATP = L-histidyl-tRNA(His) + AMP + diphosphate + H(+). This is Histidine--tRNA ligase (hisS) from Pasteurella multocida (strain Pm70).